The primary structure comprises 148 residues: 3-dehydroquinate dehydratase (148 aa).

Tyrosine 23 serves as the catalytic Proton acceptor. Positions 75, 81, and 88 each coordinate substrate. Catalysis depends on histidine 101, which acts as the Proton donor. Substrate-binding positions include 102-103 (LS) and arginine 112.

Belongs to the type-II 3-dehydroquinase family. In terms of assembly, homododecamer.

The catalysed reaction is 3-dehydroquinate = 3-dehydroshikimate + H2O. The protein operates within metabolic intermediate biosynthesis; chorismate biosynthesis; chorismate from D-erythrose 4-phosphate and phosphoenolpyruvate: step 3/7. Functionally, catalyzes a trans-dehydration via an enolate intermediate. The protein is 3-dehydroquinate dehydratase of Xanthomonas axonopodis pv. citri (strain 306).